Consider the following 791-residue polypeptide: Putative DNA (cytosine-5)-methyltransferase CMT1 (791 aa).

A disordered region spans residues 37-59; that stretch reads YQSKKTKLQAPTKKPANKGGKKE. Residues 79–199 form the BAH domain; that stretch reads VLINLNDDVY…VPYLNFTSAD (121 aa). The SAM-dependent MTase C5-type domain maps to 225–768; the sequence is KFLLDLYSGC…YAFGMASQGL (544 aa). Positions 308–333 form a coiled coil; it reads VESISELEDEEVEENDDIDEASTGAE. Residues 339-404 form the Chromo domain; it reads FEVEKFLGIM…DGFKSHLLPL (66 aa). The active site involves cysteine 417.

This sequence belongs to the class I-like SAM-binding methyltransferase superfamily. C5-methyltransferase family. As to expression, expressed in flowers. Not detected in leaves, roots, seedlings and plants prior formation of flower buds.

The protein resides in the nucleus. The catalysed reaction is a 2'-deoxycytidine in DNA + S-adenosyl-L-methionine = a 5-methyl-2'-deoxycytidine in DNA + S-adenosyl-L-homocysteine + H(+). May be involved in the CpXpG methylation and in gene silencing. The polypeptide is Putative DNA (cytosine-5)-methyltransferase CMT1 (CMT1) (Arabidopsis thaliana (Mouse-ear cress)).